We begin with the raw amino-acid sequence, 339 residues long: U11/U12 small nuclear ribonucleoprotein 48 kDa protein (339 aa).

Residues 55–82 (VVICPYDSNHHMPKSSLAKHMASCRLRK) form a CHHC U11-48K-type zinc finger. Cysteine 58, histidine 64, histidine 74, and cysteine 78 together coordinate Zn(2+). Residues lysine 87 and lysine 104 each participate in a glycyl lysine isopeptide (Lys-Gly) (interchain with G-Cter in SUMO2) cross-link. The disordered stretch occupies residues 255–339 (HWQEEQEKAE…HSHKRRKQKI (85 aa)). Residues 294–309 (RHRRDRSRSPHKRKRN) are compositionally biased toward basic residues. A compositionally biased stretch (basic and acidic residues) spans 310–328 (KDKDKNCESRRRKERDGER). The span at 329 to 339 (HHSHKRRKQKI) shows a compositional bias: basic residues.

As to quaternary structure, component of the U11/U12 snRNPs that are part of the U12-type spliceosome. Not found in the major spliceosome.

Its subcellular location is the nucleus. Likely involved in U12-type 5' splice site recognition. The polypeptide is U11/U12 small nuclear ribonucleoprotein 48 kDa protein (SNRNP48) (Homo sapiens (Human)).